We begin with the raw amino-acid sequence, 841 residues long: MNIQGKGFPLDLGRSFTEDAPRPPVPGEEGELVSTDPRPVSHGFYSSKSDAVRNETSTATPRRSDLDLGYEPEGSASPTPPYLKWAESLHSLLDDQDGINLFRTFLKQEDCADLLDFWFACSGFRKLEPCVSNEEKRLKLAKAIYKKYILDNNGIVSRQIKPATKSFIKDCVMKLQIDPDMFDQAQTEIQCMIEDNTYPLFLKSDIYLEYTRTGGESPKIYSDPSSGSGTGKGLPGYLPTLNEDEEWKCDQDTEPEASRDSAPSSRLTQKLLLETATQRATSTRRYSEGREFRHGSWREPVNPYYVNTGYAMAPATSANDSEQQSMSSDADTMSLTDSSIDGIPPYRLRKQHRREMQESAKANGRVPLPHIPRTYRMPKDIHVEPEKFAAELINRLEEVQKEREAEEKLEERLKRVRAEEEGEDADISSGPSVISHKMPSAQPFHHFAPRYSEMGCAGMQMRDAHEENPESILDEHVQRVMKTPGCQSPGPGRHSPKPRSPESGHLGKLSGTLGTIPPGHGKHTTKSGMKLDAANLYHHKHVYHHIHHHSMMKPKEQIEAEATQRVQNSFAWNVDSHNYATKSRNYSENLGMAPVPMDSLGYSGKASLLSKRNIKKTDSGKSDGANYEMPGSPEDVERNQKILQWIIEGEKEISRHKKTNHGSSGVKKQLSHDMVRPLSIERPVAVHPWVSAQLRNVVQPSHPFIQDPTMPPNPAPNPLTQLEEARRRLEEEEKRAGKLPLKQRLKPQKRPGSGASQPCENIVVAYYFCGEPIPYRTLVKGRVVTLGQFKELLTKKGNYRYYFKKVSDEFDCGVVFEEVREDDTILPIFEEKIIGKVEKID.

The interval 1-78 (MNIQGKGFPL…GYEPEGSASP (78 aa)) is disordered. Residues 44–61 (FYSSKSDAVRNETSTATP) are compositionally biased toward polar residues. Positions 88 to 211 (SLHSLLDDQD…LKSDIYLEYT (124 aa)) constitute an RGS domain. Residues 217–269 (SPKIYSDPSSGSGTGKGLPGYLPTLNEDEEWKCDQDTEPEASRDSAPSSRLTQ) are disordered. Residues 248–259 (KCDQDTEPEASR) are compositionally biased toward basic and acidic residues. The segment at 348–433 (LRKQHRREMQ…DADISSGPSV (86 aa)) is interaction with GSK3B. The tract at residues 434 to 508 (ISHKMPSAQP…RSPESGHLGK (75 aa)) is interaction with beta-catenin. Disordered regions lie at residues 482–527 (KTPG…TTKS), 613–635 (NIKK…SPED), and 727–756 (RRLE…SGAS). Positions 727–736 (RRLEEEEKRA) are enriched in basic and acidic residues. The 83-residue stretch at 759-841 (CENIVVAYYF…KIIGKVEKID (83 aa)) folds into the DIX domain.

In terms of assembly, homodimer. Post-translationally, ADP-ribosylated by tankyrase TNKS and TNKS2. Poly-ADP-ribosylated protein is recognized by RNF146, followed by ubiquitination at 'Lys-48' and subsequent activation of the Wnt signaling pathway. In terms of processing, ubiquitinated by RNF146 when poly-ADP-ribosylated, leading to its degradation and subsequent activation of the Wnt signaling pathway.

Its subcellular location is the cytoplasm. It localises to the nucleus. It is found in the membrane. The protein localises to the cell membrane. Its function is as follows. Component of the beta-catenin destruction complex required for regulating CTNNB1 levels through phosphorylation and ubiquitination, and modulating Wnt-signaling. Controls dorsoventral patterning via two opposing effects; down-regulates CTNNB1 to inhibit the Wnt signaling pathway and ventralize embryos, but also dorsalizes embryos by activating a Wnt-independent JNK signaling pathway. The chain is Axin-1 (AXIN1) from Gallus gallus (Chicken).